The sequence spans 636 residues: Transcriptional repressor CTCFL (636 aa).

Disordered regions lie at residues 17–38, 160–195, and 222–257; these read KEQK…VQRV, ENPE…DKRE, and LEEQ…PQSF. The segment covering 160–170 has biased composition (acidic residues); it reads ENPELTPDLDE. The segment covering 242-251 has biased composition (basic residues); sequence AKPKRRRQTK. 11 C2H2-type zinc fingers span residues 257–279, 285–307, 313–336, 342–364, 370–392, 398–421, 428–451, 458–480, 486–508, 514–537, and 546–572; these read FQCD…IKIH, HLCH…VNTH, HKCR…RYKH, FKCS…IRSH, FQCC…MRTH, YECP…AQKH, YECP…RNLH, MKCR…QRTH, FKCK…MRMH, FSCL…RKYH, and HLCL…DPEH. The interval 562–624 is disordered; it reads QRHRKKCDPE…AAGSQSPDHG (63 aa). Positions 568 to 583 are enriched in basic and acidic residues; the sequence is CDPEHETLAPNKDRRP.

The protein belongs to the CTCF zinc-finger protein family. Interacts with histones, PRMT7 and SETD1A. Interacts (via N-terminus) with BAG6/BAT3. Testis-specific.

Its subcellular location is the cytoplasm. The protein resides in the nucleus. Testis-specific DNA binding protein responsible for insulator function, nuclear architecture and transcriptional control, which probably acts by recruiting epigenetic chromatin modifiers. Plays a key role in gene imprinting in male germline, by participating in the establishment of differential methylation at the IGF2/H19 imprinted control region (ICR). Directly binds the unmethylated H19 ICR and recruits the PRMT7 methyltransferase, leading to methylate histone H4 'Arg-3' to form H4R3sme2. This probably leads to recruit de novo DNA methyltransferases at these sites. Seems to act as tumor suppressor. In association with DNMT1 and DNMT3B, involved in activation of BAG1 gene expression by binding to its promoter. Required for dimethylation of H3 lysine 4 (H3K4me2) of MYC and BRCA1 promoters. This is Transcriptional repressor CTCFL (Ctcfl) from Mus musculus (Mouse).